Consider the following 367-residue polypeptide: Heme A synthase (367 aa).

The next 5 membrane-spanning stretches (helical) occupy residues 26–46, 111–131, 139–159, 174–194, and 212–232; these read IRGW…VGGA, LLAR…WLTG, LPLL…WWMV, LATH…IYRG, and AGII…VAGL. His274 is a binding site for heme. 3 helical membrane passes run 276–296, 305–325, and 327–347; these read AGAY…LRAA, SVLL…TLLL, and VPIV…GFAI. Residue His335 participates in heme binding.

Belongs to the COX15/CtaA family. Type 2 subfamily. In terms of assembly, interacts with CtaB. Heme b is required as a cofactor.

It localises to the cell membrane. It catalyses the reaction Fe(II)-heme o + 2 A + H2O = Fe(II)-heme a + 2 AH2. The protein operates within porphyrin-containing compound metabolism; heme A biosynthesis; heme A from heme O: step 1/1. In terms of biological role, catalyzes the conversion of heme O to heme A by two successive hydroxylations of the methyl group at C8. The first hydroxylation forms heme I, the second hydroxylation results in an unstable dihydroxymethyl group, which spontaneously dehydrates, resulting in the formyl group of heme A. This chain is Heme A synthase, found in Sinorhizobium fredii (strain NBRC 101917 / NGR234).